The primary structure comprises 102 residues: Small ribosomal subunit protein uS10 (102 aa).

This sequence belongs to the universal ribosomal protein uS10 family. Part of the 30S ribosomal subunit.

Its function is as follows. Involved in the binding of tRNA to the ribosomes. The chain is Small ribosomal subunit protein uS10 from Streptococcus thermophilus (strain ATCC BAA-491 / LMD-9).